Reading from the N-terminus, the 699-residue chain is Elongation factor G (699 aa).

Residues 8–288 (EDYRNFGIMA…AVVDYLPSPM (281 aa)) form the tr-type G domain. Residues 17-24 (AHIDAGKT), 86-90 (DTPGH), and 140-143 (NKMD) contribute to the GTP site.

It belongs to the TRAFAC class translation factor GTPase superfamily. Classic translation factor GTPase family. EF-G/EF-2 subfamily.

The protein localises to the cytoplasm. Catalyzes the GTP-dependent ribosomal translocation step during translation elongation. During this step, the ribosome changes from the pre-translocational (PRE) to the post-translocational (POST) state as the newly formed A-site-bound peptidyl-tRNA and P-site-bound deacylated tRNA move to the P and E sites, respectively. Catalyzes the coordinated movement of the two tRNA molecules, the mRNA and conformational changes in the ribosome. This chain is Elongation factor G, found in Rhizobium johnstonii (strain DSM 114642 / LMG 32736 / 3841) (Rhizobium leguminosarum bv. viciae).